A 490-amino-acid chain; its full sequence is MDLLVDDLFADADGVSPPPPRPAGGPKNTPAAPPLYATGRLSQAQLMPSPPMPVPPAALFNRLLDDLGFSAGPALCTMLDTWNEDLFSGFPTNADMYRECKFLSTLPSDVIDWGDAHVPERSPIDIRAHGDVAFPTLPATRDELPSYYEAMAQFFRGELRAREESYRTVLANFCSALYRYLRASVRQLHRQAHMRGRNRDLREMLRTTIADRYYRETARLARVLFLHLYLFLSREILWAAYAEQMMRPDLFDGLCCDLESWRQLACLFQPLMFINGSLTVRGVPVEARRLRELNHIREHLNLPLVRSAAAEEPGAPLTTPPVLQGNQARSSGYFMLLIRAKLDSYSSVATSEGESVMREHAYSRGRTRNNYGSTIEGLLDLPDDDDAPAEAGLVAPRMSFLSAGQRPRRLSTTAPITDVSLGDELRLDGEEVDMTPADALDDFDLEMLGDVESPSPGMTHDPVSYGALDVDDFEFEQMFTDAMGIDDFGG.

The tract at residues 11-35 (DADGVSPPPPRPAGGPKNTPAAPPL) is disordered. S16, S351, S411, and S453 each carry phosphoserine. The segment at 411-490 (STTAPITDVS…DAMGIDDFGG (80 aa)) is transcriptional activation.

The protein belongs to the herpesviridae tegument protein VP16 protein family. Interacts with VP22. Interacts with gH (via C-terminus). Interacts with the virion host shutoff protein (vhs). Interacts with VP11/12. Associates with the VP16-induced complex; binding to host HCFC1 activates VP16 for association with the octamer motif-binding host protein POU2F1, to form a multiprotein-DNA complex responsible for activating transcription of the viral immediate early genes.

The protein localises to the virion tegument. It localises to the host nucleus. Functionally, transcriptional activator of immediate-early (IE) gene products (alpha genes). Acts as a key activator of lytic infection by initiating the lytic program through the assembly of the transcriptional regulatory VP16-induced complex composed of VP16 and two cellular factors, HCFC1 and POU2F 1. VP16-induced complex represents a regulatory switch: when it is on, it promotes IE-gene expression and thus lytic infection, and when it is off, it limits IE-gene transcription favoring latent infection. In terms of biological role, may play a role in the aggregation of tegument proteins around nucleocapsids during virus morphogenesis. In Human herpesvirus 2 (strain 333) (HHV-2), this protein is Tegument protein VP16.